We begin with the raw amino-acid sequence, 250 residues long: Ribonuclease HII (250 aa).

The 185-residue stretch at 66–250 folds into the RNase H type-2 domain; that stretch reads QLVAGVDEVG…TFAPVSDFFK (185 aa). A divalent metal cation-binding residues include Asp72, Glu73, and Asp164.

Belongs to the RNase HII family. Requires Mn(2+) as cofactor. It depends on Mg(2+) as a cofactor.

It is found in the cytoplasm. It catalyses the reaction Endonucleolytic cleavage to 5'-phosphomonoester.. In terms of biological role, endonuclease that specifically degrades the RNA of RNA-DNA hybrids. This Lactobacillus acidophilus (strain ATCC 700396 / NCK56 / N2 / NCFM) protein is Ribonuclease HII.